A 133-amino-acid polypeptide reads, in one-letter code: Homeobox protein HD-5 (133 aa).

Residues 34-93 (SKRSRLKLSGQQIDVLESNFKIDSHPNSATKSLLSNALSIPLKNIQIWFQNRRAKEKTAR) constitute a DNA-binding region (homeobox). The segment at 86–109 (RAKEKTARDGGRRRSGNAEIEDGE) is disordered.

It is found in the nucleus. This is Homeobox protein HD-5 (HD-5) from Encephalitozoon cuniculi (strain GB-M1) (Microsporidian parasite).